The following is a 61-amino-acid chain: Small ribosomal subunit protein uS14B (61 aa).

Zn(2+) contacts are provided by cysteine 24, cysteine 27, cysteine 40, and cysteine 43.

It belongs to the universal ribosomal protein uS14 family. Zinc-binding uS14 subfamily. As to quaternary structure, part of the 30S ribosomal subunit. Contacts proteins S3 and S10. Requires Zn(2+) as cofactor.

In terms of biological role, binds 16S rRNA, required for the assembly of 30S particles and may also be responsible for determining the conformation of the 16S rRNA at the A site. The protein is Small ribosomal subunit protein uS14B of Bacillus velezensis (strain DSM 23117 / BGSC 10A6 / LMG 26770 / FZB42) (Bacillus amyloliquefaciens subsp. plantarum).